Here is a 162-residue protein sequence, read N- to C-terminus: Disulfide bond formation protein B (162 aa).

At 1-8 the chain is on the cytoplasmic side; the sequence is MTPLFRKA. The chain crosses the membrane as a helical span at residues 9-25; the sequence is VWLLFAVSVCAFAGSLA. Topologically, residues 26–43 are periplasmic; sequence AQYVLGMEPCVLCISQRL. An intrachain disulfide couples Cys35 to Cys38. The helical transmembrane segment at 44-60 threads the bilayer; that stretch reads CVLATALCTAIVLMCRP. Residues 61 to 67 lie on the Cytoplasmic side of the membrane; it reads RRRAGGL. Residues 68 to 85 traverse the membrane as a helical segment; it reads FGAVFISIPAVTGISVAA. At 86 to 141 the chain is on the periplasmic side; the sequence is YQLWLQSLPPGTAPSCGAPWTFRLKGWSLFDWFEPVVRGFGNCAEPDYLLGVALPV. Cys101 and Cys128 are joined by a disulfide. Residues 142–160 form a helical membrane-spanning segment; the sequence is WSAAYFLAVVLTVWWAWAR. At 161–162 the chain is on the cytoplasmic side; sequence AK.

The protein belongs to the DsbB family.

The protein resides in the cell inner membrane. In terms of biological role, required for disulfide bond formation in some periplasmic proteins. Acts by oxidizing the DsbA protein. The polypeptide is Disulfide bond formation protein B (Neisseria meningitidis serogroup C / serotype 2a (strain ATCC 700532 / DSM 15464 / FAM18)).